The following is a 119-amino-acid chain: Probable cyclase otaY (119 aa).

Belongs to the aurE cyclase family.

It functions in the pathway mycotoxin biosynthesis. Functionally, probable cyclase; part of the gene cluster that mediates the biosynthesis of ochratoxin A (OTA), a mycotoxin composed of a chlorinated type I polyketide dihydroisocoumarin moiety linked to L-phenylalanine, and demonstrated to have nephrotoxic, immunotoxic, genotoxic, neurotoxic, and teratogenic properties. OtaY is probably involved in the polyketide cyclization. The pathway begins with the highly reducing polyketide synthase otaA that catalyzes the formation of the isocoumarin group during the initial stages of biosynthesis, starting from one acetate and 4 malonate units, to originate the characteristic pentaketide skeleton 7-methylmellein (7-MM) of the OTA molecule. The newly identified cyclase otaY might be involved in the polyketide cyclization reaction during the initial steps of the OTA biosynthesis. 7-MM is then oxidized into 7-carboxymellein (also called ochratoxin beta) by the cytochrome P450 monooxygenase otaC. The NRPS encoded by the otaB gene is involved in the linking of phenylalanine to the dihydroisocoumarin ring. The reaction catalyzed by NRPS results in the production of ochratoxin B (OTB), which is the non-chlorinated analog of OTA and which subsequently serves as the substrate of the halogenase otaD for chlorination activity to form the final molecular structure of OTA, containing a chlorine atom in the C-5 position of the molecule. The polypeptide is Probable cyclase otaY (Aspergillus niger (strain ATCC MYA-4892 / CBS 513.88 / FGSC A1513)).